Reading from the N-terminus, the 358-residue chain is Vascular endothelial growth factor D (358 aa).

The signal sequence occupies residues 1–21 (MYGEWGMGNILMMFHVYLVQG). The propeptide occupies 22 to 93 (FRSEHGPVKD…SRSASHRSTR (72 aa)). 3 disulfide bridges follow: Cys-116-Cys-158, Cys-147-Cys-194, and Cys-151-Cys-196. 2 N-linked (GlcNAc...) asparagine glycosylation sites follow: Asn-160 and Asn-190. The propeptide occupies 211–358 (SIQTPEEDEC…AQGLYSQENP (148 aa)). Residues 227 to 242 (CPIDMLWDNTKCKCVL) form a 1; approximate repeat. Positions 227–323 (CPIDMLWDNT…PDTCSCEDRC (97 aa)) are 4 X 16 AA repeats of C-X(10)-C-X-C-X(1,3)-C. 3 tandem repeats follow at residues 263-278 (CGPH…ECVC), 282-298 (CPGD…CFEC), and 306-323 (CQKH…EDRC). An N-linked (GlcNAc...) asparagine glycan is attached at Asn-292.

It belongs to the PDGF/VEGF growth factor family. Homodimer; non-covalent and antiparallel. Undergoes a complex proteolytic maturation which generates a variety of processed secreted forms with increased activity toward VEGFR-3 and VEGFR-2. VEGF-D first form an antiparallel homodimer linked by disulfide bonds before secretion. The fully processed VEGF-D is composed mostly of two VEGF homology domains (VHDs) bound by non-covalent interactions. Highly expressed in fetal and adult lung.

It is found in the secreted. Functionally, growth factor active in angiogenesis, lymphangiogenesis and endothelial cell growth, stimulating their proliferation and migration and also has effects on the permeability of blood vessels. May function in the formation of the venous and lymphatic vascular systems during embryogenesis, and also in the maintenance of differentiated lymphatic endothelium in adults. Binds and activates VEGFR-3 (Flt4) receptor. In Mus musculus (Mouse), this protein is Vascular endothelial growth factor D.